The primary structure comprises 227 residues: PKHD-type hydroxylase A1S_0473 (227 aa).

Residues 78–178 (KIIPPLFNRY…RFASFFWVQS (101 aa)) enclose the Fe2OG dioxygenase domain. Fe cation is bound by residues histidine 96, aspartate 98, and histidine 159. Residue arginine 169 coordinates 2-oxoglutarate.

Requires Fe(2+) as cofactor. It depends on L-ascorbate as a cofactor.

The protein is PKHD-type hydroxylase A1S_0473 of Acinetobacter baumannii (strain ATCC 17978 / DSM 105126 / CIP 53.77 / LMG 1025 / NCDC KC755 / 5377).